Consider the following 129-residue polypeptide: UPF0102 protein Cag_1992 (129 aa).

Belongs to the UPF0102 family.

This Chlorobium chlorochromatii (strain CaD3) protein is UPF0102 protein Cag_1992.